The chain runs to 408 residues: Putative glutamate--cysteine ligase 2 (408 aa).

It belongs to the glutamate--cysteine ligase type 2 family. YbdK subfamily.

The enzyme catalyses L-cysteine + L-glutamate + ATP = gamma-L-glutamyl-L-cysteine + ADP + phosphate + H(+). In terms of biological role, ATP-dependent carboxylate-amine ligase which exhibits weak glutamate--cysteine ligase activity. The chain is Putative glutamate--cysteine ligase 2 from Bradyrhizobium sp. (strain BTAi1 / ATCC BAA-1182).